A 122-amino-acid chain; its full sequence is Large ribosomal subunit protein uL14 (122 aa).

It belongs to the universal ribosomal protein uL14 family. Part of the 50S ribosomal subunit. Forms a cluster with proteins L3 and L19. In the 70S ribosome, L14 and L19 interact and together make contacts with the 16S rRNA in bridges B5 and B8.

Its function is as follows. Binds to 23S rRNA. Forms part of two intersubunit bridges in the 70S ribosome. The chain is Large ribosomal subunit protein uL14 from Bordetella parapertussis (strain 12822 / ATCC BAA-587 / NCTC 13253).